A 692-amino-acid polypeptide reads, in one-letter code: Elongation factor G (692 aa).

The tr-type G domain occupies 8–282; sequence EKTRNIGIMA…AVVEYMPAPT (275 aa). Residues 17-24, 81-85, and 135-138 each bind GTP; these read AHIDAGKT, DTPGH, and NKMD. The interval 285 to 304 is disordered; that stretch reads PNIKGVHPETGEADERHSSD. Positions 290–304 are enriched in basic and acidic residues; it reads VHPETGEADERHSSD.

It belongs to the TRAFAC class translation factor GTPase superfamily. Classic translation factor GTPase family. EF-G/EF-2 subfamily.

It localises to the cytoplasm. Its function is as follows. Catalyzes the GTP-dependent ribosomal translocation step during translation elongation. During this step, the ribosome changes from the pre-translocational (PRE) to the post-translocational (POST) state as the newly formed A-site-bound peptidyl-tRNA and P-site-bound deacylated tRNA move to the P and E sites, respectively. Catalyzes the coordinated movement of the two tRNA molecules, the mRNA and conformational changes in the ribosome. This chain is Elongation factor G, found in Desulfitobacterium hafniense (strain Y51).